Consider the following 83-residue polypeptide: Normal mucosa of esophagus-specific gene 1 protein (83 aa).

This sequence belongs to the complex I NDUFA4 subunit family.

Its subcellular location is the nucleus. This Rattus norvegicus (Rat) protein is Normal mucosa of esophagus-specific gene 1 protein (Nmes1).